A 74-amino-acid polypeptide reads, in one-letter code: Protein WFDC9 (74 aa).

An N-terminal signal peptide occupies residues 1–19; the sequence is MKFWILLLTVSAHGIVVFL.

The protein resides in the secreted. The chain is Protein WFDC9 (Wfdc9) from Rattus norvegicus (Rat).